A 405-amino-acid polypeptide reads, in one-letter code: SPbeta prophage-derived uncharacterized protein YomR (405 aa).

Positions 9 to 36 form a coiled coil; the sequence is QLKQNNIQINSLRGSNDRAEKHMLEHEQ.

In Bacillus subtilis (strain 168), this protein is SPbeta prophage-derived uncharacterized protein YomR (yomR).